The following is an 838-amino-acid chain: Periostin (838 aa).

A signal peptide spans 1-23; that stretch reads MVPLLPLYALLLLFLCDINPANA. Positions 42 to 96 constitute an EMI domain; sequence GPNVCALQQILGTKKKYFSSCKNWYQGAICGKKTTVLYECCPGYMRMEGMKGCPA. 5 disulfides stabilise this stretch: Cys-46–Cys-82, Cys-71–Cys-335, Cys-81–Cys-94, Cys-210–Cys-313, and Cys-469–Cys-474. Cys-62 is modified (S-cysteinyl cysteine). FAS1 domains are found at residues 99–232, 236–367, 370–494, and 498–630; these read PIDH…DRVL, GTSI…DEVL, DSAK…REII, and EKSL…DKLL. The N-linked (GlcNAc...) asparagine glycan is linked to Asn-601. The disordered stretch occupies residues 811-838; it reads QGDTPAKKIPANKRVQGPRRRSREGRSQ. Over residues 826-838 the composition is skewed to basic residues; it reads QGPRRRSREGRSQ.

As to quaternary structure, homodimer. Interacts with BMP1 and fibronectin. In terms of processing, gamma-carboxylation is controversial. Gamma-carboxyglutamated; gamma-carboxyglutamate residues are formed by vitamin K dependent carboxylation; these residues may be required for binding to calcium. According to a more recent report in human, does not contain vitamin K-dependent gamma-carboxyglutamate residues. In terms of tissue distribution, preferentially expressed in periosteum and periodontal ligament. Also expressed in the developing and adult heart.

Its subcellular location is the golgi apparatus. It localises to the secreted. It is found in the extracellular space. The protein localises to the extracellular matrix. In terms of biological role, induces cell attachment and spreading and plays a role in cell adhesion. Enhances incorporation of BMP1 in the fibronectin matrix of connective tissues, and subsequent proteolytic activation of lysyl oxidase LOX. The polypeptide is Periostin (Postn) (Mus musculus (Mouse)).